A 154-amino-acid polypeptide reads, in one-letter code: 6,7-dimethyl-8-ribityllumazine synthase (154 aa).

5-amino-6-(D-ribitylamino)uracil-binding positions include Phe-23, 57–59 (AFE), and 81–83 (AVI). 86-87 (AT) lines the (2S)-2-hydroxy-3-oxobutyl phosphate pocket. His-89 serves as the catalytic Proton donor. Phe-114 contacts 5-amino-6-(D-ribitylamino)uracil. Arg-128 contacts (2S)-2-hydroxy-3-oxobutyl phosphate.

This sequence belongs to the DMRL synthase family.

It catalyses the reaction (2S)-2-hydroxy-3-oxobutyl phosphate + 5-amino-6-(D-ribitylamino)uracil = 6,7-dimethyl-8-(1-D-ribityl)lumazine + phosphate + 2 H2O + H(+). Its pathway is cofactor biosynthesis; riboflavin biosynthesis; riboflavin from 2-hydroxy-3-oxobutyl phosphate and 5-amino-6-(D-ribitylamino)uracil: step 1/2. In terms of biological role, catalyzes the formation of 6,7-dimethyl-8-ribityllumazine by condensation of 5-amino-6-(D-ribitylamino)uracil with 3,4-dihydroxy-2-butanone 4-phosphate. This is the penultimate step in the biosynthesis of riboflavin. The polypeptide is 6,7-dimethyl-8-ribityllumazine synthase (Nautilia profundicola (strain ATCC BAA-1463 / DSM 18972 / AmH)).